Here is a 228-residue protein sequence, read N- to C-terminus: Urease accessory protein UreF (228 aa).

Belongs to the UreF family. As to quaternary structure, ureD, UreF and UreG form a complex that acts as a GTP-hydrolysis-dependent molecular chaperone, activating the urease apoprotein by helping to assemble the nickel containing metallocenter of UreC. The UreE protein probably delivers the nickel.

The protein resides in the cytoplasm. Required for maturation of urease via the functional incorporation of the urease nickel metallocenter. The protein is Urease accessory protein UreF of Photorhabdus laumondii subsp. laumondii (strain DSM 15139 / CIP 105565 / TT01) (Photorhabdus luminescens subsp. laumondii).